Here is a 487-residue protein sequence, read N- to C-terminus: UPF0276 protein SAV_2218 (487 aa).

The UPF0276 stretch occupies residues 1 to 285 (MVEEGTMERL…LGAIRKTLEK (285 aa)). A unknown region spans residues 286–487 (AGTRAGASAG…RATRRVLLRR (202 aa)). A disordered region spans residues 319-348 (AGPRRGGADAQAAPRAAGTEALSAASTSTP). Residues 326 to 348 (ADAQAAPRAAGTEALSAASTSTP) are compositionally biased toward low complexity.

This sequence in the N-terminal section; belongs to the UPF0276 family.

This is UPF0276 protein SAV_2218 from Streptomyces avermitilis (strain ATCC 31267 / DSM 46492 / JCM 5070 / NBRC 14893 / NCIMB 12804 / NRRL 8165 / MA-4680).